Here is a 1059-residue protein sequence, read N- to C-terminus: Kinesin-like protein KIN-7K, chloroplastic (1059 aa).

Low complexity-rich tracts occupy residues Met1–Ser35 and Pro43–Phe58. A chloroplast-targeting transit peptide spans Met1–Thr48. The tract at residues Met1–Ser99 is disordered. Gly residues predominate over residues Phe59–Ser69. Residues Arg70 to Pro87 are compositionally biased toward low complexity. Over residues Val88–Phe97 the composition is skewed to pro residues. Residues Ser114 to Val431 form the Kinesin motor domain. An ATP-binding site is contributed by Gly194–Thr201. Positions Ala435–Val518 form a coiled coil. The tract at residues Ala526 to Pro570 is disordered. Residues Ser546–Ser569 are compositionally biased toward polar residues. Coiled coils occupy residues Glu640–Ser674, Glu700–Arg781, and Leu862–Asp910. An RING-type zinc finger spans residues Cys1013–Arg1048.

This sequence belongs to the TRAFAC class myosin-kinesin ATPase superfamily. Kinesin family. KIN-7 subfamily.

The protein localises to the plastid. It localises to the chloroplast. The sequence is that of Kinesin-like protein KIN-7K, chloroplastic from Oryza sativa subsp. japonica (Rice).